Consider the following 78-residue polypeptide: Large ribosomal subunit protein bL28 (78 aa).

The disordered stretch occupies residues 1–31 (MAAHCQVTGAEPGFGHSISHSHRRNKRRFDP).

Belongs to the bacterial ribosomal protein bL28 family.

This is Large ribosomal subunit protein bL28 from Paenarthrobacter aurescens (strain TC1).